We begin with the raw amino-acid sequence, 186 residues long: Peptidyl-tRNA hydrolase (186 aa).

Residue Tyr-17 participates in tRNA binding. His-22 serves as the catalytic Proton acceptor. TRNA-binding residues include Tyr-64 and Asn-66.

Belongs to the PTH family. As to quaternary structure, monomer.

The protein localises to the cytoplasm. It carries out the reaction an N-acyl-L-alpha-aminoacyl-tRNA + H2O = an N-acyl-L-amino acid + a tRNA + H(+). Functionally, hydrolyzes ribosome-free peptidyl-tRNAs (with 1 or more amino acids incorporated), which drop off the ribosome during protein synthesis, or as a result of ribosome stalling. Its function is as follows. Catalyzes the release of premature peptidyl moieties from peptidyl-tRNA molecules trapped in stalled 50S ribosomal subunits, and thus maintains levels of free tRNAs and 50S ribosomes. The chain is Peptidyl-tRNA hydrolase from Methylacidiphilum infernorum (isolate V4) (Methylokorus infernorum (strain V4)).